The sequence spans 210 residues: MGYIAVVDYDMGNLHSVCKGLEKVGGNPLVTDQAHVIDGATAIVLPGVGSFDPAVQHLRARGLEEVLKTAIAKGIPFLGICLGSQLLFDSSEEGQETGLGIIPGQVKHFRSEPGLTIPHMGWNGLQFNQPDLCLWQDLPPEPQVYFVHSYYMAPLDPQVIAASTTHGSQTIAAAIAKDNVMAVQFHPEKSSTLGLKILANFVKKVALSDI.

The Glutamine amidotransferase type-1 domain maps to 3-210 (YIAVVDYDMG…FVKKVALSDI (208 aa)). Cys-81 serves as the catalytic Nucleophile. Active-site residues include His-186 and Glu-188.

As to quaternary structure, heterodimer of HisH and HisF.

The protein localises to the cytoplasm. The enzyme catalyses 5-[(5-phospho-1-deoxy-D-ribulos-1-ylimino)methylamino]-1-(5-phospho-beta-D-ribosyl)imidazole-4-carboxamide + L-glutamine = D-erythro-1-(imidazol-4-yl)glycerol 3-phosphate + 5-amino-1-(5-phospho-beta-D-ribosyl)imidazole-4-carboxamide + L-glutamate + H(+). The catalysed reaction is L-glutamine + H2O = L-glutamate + NH4(+). It participates in amino-acid biosynthesis; L-histidine biosynthesis; L-histidine from 5-phospho-alpha-D-ribose 1-diphosphate: step 5/9. In terms of biological role, IGPS catalyzes the conversion of PRFAR and glutamine to IGP, AICAR and glutamate. The HisH subunit catalyzes the hydrolysis of glutamine to glutamate and ammonia as part of the synthesis of IGP and AICAR. The resulting ammonia molecule is channeled to the active site of HisF. The chain is Imidazole glycerol phosphate synthase subunit HisH (hisH) from Synechocystis sp. (strain ATCC 27184 / PCC 6803 / Kazusa).